We begin with the raw amino-acid sequence, 205 residues long: uncharacterized protein (205 aa).

The protein belongs to the flavoredoxin family. Requires FMN as cofactor.

This is an uncharacterized protein from Bacillus subtilis (strain 168).